We begin with the raw amino-acid sequence, 373 residues long: Alanine dehydrogenase (373 aa).

Positions 15 and 74 each coordinate substrate. H95 functions as the Proton donor/acceptor in the catalytic mechanism. NAD(+) contacts are provided by residues S133, 177–178, D197, S219, 238–239, 266–269, and 298–301; these read QA, VL, IAID, and VANM. D269 (proton donor/acceptor) is an active-site residue.

It belongs to the AlaDH/PNT family. In terms of assembly, homohexamer. Trimer of dimer.

It carries out the reaction L-alanine + NAD(+) + H2O = pyruvate + NH4(+) + NADH + H(+). Its pathway is amino-acid degradation; L-alanine degradation via dehydrogenase pathway; NH(3) and pyruvate from L-alanine: step 1/1. Its function is as follows. Catalyzes the reversible reductive amination of pyruvate to L-alanine. May play a role in cell wall synthesis as L-alanine is an important constituent of the peptidoglycan layer. This Staphylococcus haemolyticus (strain JCSC1435) protein is Alanine dehydrogenase (ald).